The following is a 282-amino-acid chain: Bis(5'-nucleosyl)-tetraphosphatase, symmetrical (282 aa).

Belongs to the Ap4A hydrolase family.

It catalyses the reaction P(1),P(4)-bis(5'-adenosyl) tetraphosphate + H2O = 2 ADP + 2 H(+). Functionally, hydrolyzes diadenosine 5',5'''-P1,P4-tetraphosphate to yield ADP. This is Bis(5'-nucleosyl)-tetraphosphatase, symmetrical from Klebsiella pneumoniae (strain 342).